Here is a 187-residue protein sequence, read N- to C-terminus: Peptidyl-tRNA hydrolase (187 aa).

Residue Phe14 coordinates tRNA. The active-site Proton acceptor is the His19. Residues Tyr64, Asn66, and Asn112 each coordinate tRNA.

Belongs to the PTH family. In terms of assembly, monomer.

It is found in the cytoplasm. It carries out the reaction an N-acyl-L-alpha-aminoacyl-tRNA + H2O = an N-acyl-L-amino acid + a tRNA + H(+). Its function is as follows. Hydrolyzes ribosome-free peptidyl-tRNAs (with 1 or more amino acids incorporated), which drop off the ribosome during protein synthesis, or as a result of ribosome stalling. In terms of biological role, catalyzes the release of premature peptidyl moieties from peptidyl-tRNA molecules trapped in stalled 50S ribosomal subunits, and thus maintains levels of free tRNAs and 50S ribosomes. The chain is Peptidyl-tRNA hydrolase from Oceanobacillus iheyensis (strain DSM 14371 / CIP 107618 / JCM 11309 / KCTC 3954 / HTE831).